Consider the following 367-residue polypeptide: Peptide chain release factor 2 (367 aa).

The residue at position 247 (Q247) is an N5-methylglutamine.

The protein belongs to the prokaryotic/mitochondrial release factor family. In terms of processing, methylated by PrmC. Methylation increases the termination efficiency of RF2.

It localises to the cytoplasm. Its function is as follows. Peptide chain release factor 2 directs the termination of translation in response to the peptide chain termination codons UGA and UAA. The chain is Peptide chain release factor 2 from Caulobacter sp. (strain K31).